Here is a 400-residue protein sequence, read N- to C-terminus: Probable S-adenosylmethionine synthase (400 aa).

Lys135 to Asp140 lines the ATP pocket.

This sequence belongs to the AdoMet synthase 2 family. Requires Mg(2+) as cofactor.

It catalyses the reaction L-methionine + ATP + H2O = S-adenosyl-L-methionine + phosphate + diphosphate. It functions in the pathway amino-acid biosynthesis; S-adenosyl-L-methionine biosynthesis; S-adenosyl-L-methionine from L-methionine: step 1/1. Its function is as follows. Catalyzes the formation of S-adenosylmethionine from methionine and ATP. This chain is Probable S-adenosylmethionine synthase (mat), found in Aquifex aeolicus (strain VF5).